Here is a 445-residue protein sequence, read N- to C-terminus: tRNA-2-methylthio-N(6)-dimethylallyladenosine synthase (445 aa).

The MTTase N-terminal domain maps to 3 to 124; that stretch reads KKLYIKTYGC…LPELISKVVR (122 aa). [4Fe-4S] cluster contacts are provided by Cys-12, Cys-48, Cys-87, Cys-162, Cys-166, and Cys-169. The Radical SAM core domain occupies 148–380; sequence YPQGTSAFIS…QQELMAQQLA (233 aa). One can recognise a TRAM domain in the interval 383–445; that stretch reads TSCVGSTMKV…SLNSLTGEIL (63 aa).

The protein belongs to the methylthiotransferase family. MiaB subfamily. As to quaternary structure, monomer. Requires [4Fe-4S] cluster as cofactor.

It is found in the cytoplasm. It catalyses the reaction N(6)-dimethylallyladenosine(37) in tRNA + (sulfur carrier)-SH + AH2 + 2 S-adenosyl-L-methionine = 2-methylsulfanyl-N(6)-dimethylallyladenosine(37) in tRNA + (sulfur carrier)-H + 5'-deoxyadenosine + L-methionine + A + S-adenosyl-L-homocysteine + 2 H(+). Its function is as follows. Catalyzes the methylthiolation of N6-(dimethylallyl)adenosine (i(6)A), leading to the formation of 2-methylthio-N6-(dimethylallyl)adenosine (ms(2)i(6)A) at position 37 in tRNAs that read codons beginning with uridine. This is tRNA-2-methylthio-N(6)-dimethylallyladenosine synthase from Rickettsia conorii (strain ATCC VR-613 / Malish 7).